The sequence spans 169 residues: Proepiregulin (169 aa).

A signal peptide spans 1–29 (MTAGRRMEMLCAGRVPALLLCLGFHLLQA). A propeptide spanning residues 30-62 (VLSTTVIPSCIPGESSDNCTALVQTEDNPRVAQ) is cleaved from the precursor. N47 carries N-linked (GlcNAc...) asparagine glycosylation. The Extracellular portion of the chain corresponds to 60–119 (VAQVSITKCSSDMNGYCLHGQCIYLVDMSQNYCRCEVGYTGVRCEHFFLTVHQPLSKEYV). The EGF-like domain occupies 64–104 (SITKCSSDMNGYCLHGQCIYLVDMSQNYCRCEVGYTGVRCE). Disulfide bonds link C68-C81, C76-C92, and C94-C103. The propeptide at 109-169 (TVHQPLSKEY…TSGDPELPQV (61 aa)) is removed in mature form. Residues 120-140 (ALTVILIILFLITVVGSTYYF) form a helical membrane-spanning segment. Topologically, residues 141–169 (CRWYRNRKSKEPKKEYERVTSGDPELPQV) are cytoplasmic.

Interacts with EGFR and ERBB4. As to expression, in normal adults, expressed predominantly in the placenta and peripheral blood leukocytes. High levels were detected in carcinomas of the bladder, lung, kidney and colon.

The protein localises to the secreted. It is found in the extracellular space. It localises to the cell membrane. Functionally, ligand of the EGF receptor/EGFR and ERBB4. Stimulates EGFR and ERBB4 tyrosine phosphorylation. Contributes to inflammation, wound healing, tissue repair, and oocyte maturation by regulating angiogenesis and vascular remodeling and by stimulating cell proliferation. The sequence is that of Proepiregulin (EREG) from Homo sapiens (Human).